The following is a 130-amino-acid chain: Cuticle protein 14 isoform b (130 aa).

One can recognise a Chitin-binding type R&amp;R domain in the interval 24–90; that stretch reads IGNYNFGYNE…NVHTNEPGTD (67 aa).

In Limulus polyphemus (Atlantic horseshoe crab), this protein is Cuticle protein 14 isoform b.